Consider the following 40-residue polypeptide: Cytochrome c3 hydrogenase small chain (40 aa).

Requires Fe cation as cofactor.

It carries out the reaction 2 Fe(III)-[cytochrome c3] + H2 = 2 Fe(II)-[cytochrome c3] + 2 H(+). The protein is Cytochrome c3 hydrogenase small chain (hoxK) of Acidithiobacillus ferrooxidans (Thiobacillus ferrooxidans).